Consider the following 331-residue polypeptide: Serpentine receptor class alpha-9 (331 aa).

A run of 7 helical transmembrane segments spans residues isoleucine 26 to leucine 46, leucine 58 to isoleucine 78, tyrosine 104 to isoleucine 124, isoleucine 142 to phenylalanine 162, tyrosine 189 to isoleucine 209, valine 238 to alanine 258, and leucine 275 to isoleucine 295.

This sequence belongs to the nematode receptor-like protein sra family.

It localises to the membrane. This chain is Serpentine receptor class alpha-9 (sra-9), found in Caenorhabditis elegans.